The chain runs to 82 residues: Small ribosomal subunit protein uS12 (82 aa).

Asp59 bears the 3-methylthioaspartic acid mark.

This sequence belongs to the universal ribosomal protein uS12 family. As to quaternary structure, part of the 30S ribosomal subunit. Contacts proteins S8 and S17. May interact with IF1 in the 30S initiation complex.

With S4 and S5 plays an important role in translational accuracy. Its function is as follows. Interacts with and stabilizes bases of the 16S rRNA that are involved in tRNA selection in the A site and with the mRNA backbone. Located at the interface of the 30S and 50S subunits, it traverses the body of the 30S subunit contacting proteins on the other side and probably holding the rRNA structure together. The combined cluster of proteins S8, S12 and S17 appears to hold together the shoulder and platform of the 30S subunit. The polypeptide is Small ribosomal subunit protein uS12 (rpsL) (Actinobacillus pleuropneumoniae (Haemophilus pleuropneumoniae)).